A 425-amino-acid chain; its full sequence is Pyruvate dehydrogenase E1 component subunit alpha-3, chloroplastic (425 aa).

Residues 1–66 (MAAASSFTAA…VLPGNKAAPA (66 aa)) constitute a chloroplast transit peptide. Histidine 109, tyrosine 135, arginine 136, alanine 184, isoleucine 186, aspartate 224, glycine 225, and asparagine 253 together coordinate pyruvate. Residues tyrosine 135, arginine 136, alanine 184, isoleucine 186, aspartate 224, glycine 225, asparagine 253, and histidine 322 each contribute to the thiamine diphosphate site. A Mg(2+)-binding site is contributed by aspartate 224. Asparagine 253 contributes to the Mg(2+) binding site.

As to quaternary structure, tetramer of 2 alpha and 2 beta subunits. It depends on thiamine diphosphate as a cofactor. Mg(2+) is required as a cofactor.

The protein localises to the plastid. The protein resides in the chloroplast. The enzyme catalyses N(6)-[(R)-lipoyl]-L-lysyl-[protein] + pyruvate + H(+) = N(6)-[(R)-S(8)-acetyldihydrolipoyl]-L-lysyl-[protein] + CO2. The pyruvate dehydrogenase complex catalyzes the overall conversion of pyruvate to acetyl-CoA and CO(2). It contains multiple copies of three enzymatic components: pyruvate dehydrogenase (E1), dihydrolipoamide acetyltransferase (E2) and lipoamide dehydrogenase (E3). This is Pyruvate dehydrogenase E1 component subunit alpha-3, chloroplastic from Oryza sativa subsp. japonica (Rice).